The primary structure comprises 265 residues: MTTVVFKVGGSVLNQLSPKFYQVLLQLKETGTCNPIIVHGGGPEINEALSKMNIKTEFVDGLRVTSEEVLSIAEMVMSGTINKRIVSSIQSIGGNALGLSGVDGKLLRAKQMHDGKLGLVGEVVEVNTEWLSIIMNSGGIPVISPIAIGDADKRYNVNGDMAAGAVAEAFQSKLILVSNIPGVIESVNGEEIIHHHLTKQQVESKIDSGVIYGGMIPKVRSALASLKSGVAESVILNGLNPIEIKNYLEGKTVGTVLTEREVEHV.

Substrate-binding positions include 41 to 42, Arg63, and Asn156; that span reads GG.

It belongs to the acetylglutamate kinase family. ArgB subfamily.

It localises to the cytoplasm. The enzyme catalyses N-acetyl-L-glutamate + ATP = N-acetyl-L-glutamyl 5-phosphate + ADP. The protein operates within amino-acid biosynthesis; L-arginine biosynthesis; N(2)-acetyl-L-ornithine from L-glutamate: step 2/4. Its function is as follows. Catalyzes the ATP-dependent phosphorylation of N-acetyl-L-glutamate. This chain is Acetylglutamate kinase, found in Oceanobacillus iheyensis (strain DSM 14371 / CIP 107618 / JCM 11309 / KCTC 3954 / HTE831).